The chain runs to 376 residues: Actin-related protein T1 (376 aa).

It belongs to the actin family. As to expression, in skin, expressed in the basal, spinous and granular layers of the epidermis. Also expressed in hair follicles, sebaceaous glands, eccrine sweat glands and semen.

It localises to the cytoplasm. It is found in the cytoskeleton. The protein localises to the nucleus. The protein resides in the cytoplasmic vesicle. Its subcellular location is the secretory vesicle. It localises to the acrosome. Its function is as follows. Negatively regulates the Hedgehog (SHH) signaling. Binds to the promoter of the SHH signaling mediator, GLI1, and inhibits its expression. This chain is Actin-related protein T1, found in Homo sapiens (Human).